A 633-amino-acid polypeptide reads, in one-letter code: GRAM domain-containing protein 4 (633 aa).

Disordered regions lie at residues 1 to 46, 72 to 109, and 182 to 216; these read MGIA…VRPR, LAESPNASDTECGDEIPLKTPRPSPRDSEELRDPAGPG, and VLKARSEEQPAQPQQPPKGQSQASNGTGTERRSQG. Residues 27-39 are compositionally biased toward basic and acidic residues; the sequence is PWDKGLSGREPPR. S75 and S79 each carry phosphoserine. The span at 95-104 shows a compositional bias: basic and acidic residues; sequence SPRDSEELRD. Residues 134-190 adopt a coiled-coil conformation; that stretch reads HLEIALLEKHFLQEELRKLREETNSEMLRQELDRERQRRIELEQKMQEVLKARSEEQ. The span at 190 to 205 shows a compositional bias: low complexity; sequence QPAQPQQPPKGQSQAS. Helical transmembrane passes span 295 to 315, 389 to 409, and 411 to 431; these read VYMNAVWHGWAIPMFLFLAIL, TTQKLYVALWAAFLASCFFPY, and LVGLAVGLYAGIKFFLIDFIF. The region spanning 500-578 is the GRAM domain; that stretch reads GNFHEIFNLT…MDITDIQKYK (79 aa).

Interacts with RTN4 (isoform B).

It is found in the mitochondrion membrane. The protein localises to the endoplasmic reticulum membrane. In terms of biological role, plays a role as a mediator of E2F1-induced apoptosis in the absence of p53/TP53. Inhibits TLR9 response to nucelic acids and regulates TLR9-mediated innate immune response. The polypeptide is GRAM domain-containing protein 4 (Mus musculus (Mouse)).